We begin with the raw amino-acid sequence, 203 residues long: MMSFSTSLILASGSSARRMLLENAGLAVQARPVDLDEEALRRSCEEQGHTLSQTAIALADAKANLATRDVGFDELTVAADQILDLDGVAFAKPGSVAEAAEHLRRLRGRTHVLRTAVVLYKGGEKVWEHLASPRLTMRDFSDDFLKAYLEREGPAILSCVGAYRLEGPGIQLFSAVEGVQDAVMGLPLLPLLEELRELKVLAA.

Asp80 functions as the Proton acceptor in the catalytic mechanism.

Belongs to the Maf family. A divalent metal cation is required as a cofactor.

It is found in the cytoplasm. It catalyses the reaction a ribonucleoside 5'-triphosphate + H2O = a ribonucleoside 5'-phosphate + diphosphate + H(+). It carries out the reaction a 2'-deoxyribonucleoside 5'-triphosphate + H2O = a 2'-deoxyribonucleoside 5'-phosphate + diphosphate + H(+). Its function is as follows. Nucleoside triphosphate pyrophosphatase. May have a dual role in cell division arrest and in preventing the incorporation of modified nucleotides into cellular nucleic acids. The protein is Nucleoside triphosphate pyrophosphatase of Gluconobacter oxydans (strain 621H) (Gluconobacter suboxydans).